Reading from the N-terminus, the 467-residue chain is Fumarate hydratase class II (467 aa).

Residues 98-100 (SGT), Arg126, 129-132 (HPND), 139-141 (SSN), and Thr187 contribute to the substrate site. The active-site Proton donor/acceptor is His188. Ser318 is an active-site residue. Residues Ser319 and 324–326 (KVN) contribute to the substrate site.

It belongs to the class-II fumarase/aspartase family. Fumarase subfamily. Homotetramer.

It is found in the cytoplasm. It catalyses the reaction (S)-malate = fumarate + H2O. The protein operates within carbohydrate metabolism; tricarboxylic acid cycle; (S)-malate from fumarate: step 1/1. With respect to regulation, inhibited by ATP, citrate and S-2,3-dicarboxyaziridine. Involved in the TCA cycle. FumC seems to be a backup enzyme for FumA under conditions of iron limitation and oxidative stress. Catalyzes the stereospecific interconversion of fumarate to L-malate. The polypeptide is Fumarate hydratase class II (Escherichia coli (strain K12)).